The chain runs to 193 residues: Cytidylate kinase (193 aa).

12-20 (GLAGSGTTT) contacts ATP.

Belongs to the cytidylate kinase family. Type 2 subfamily.

The protein localises to the cytoplasm. The enzyme catalyses CMP + ATP = CDP + ADP. It carries out the reaction dCMP + ATP = dCDP + ADP. The protein is Cytidylate kinase of Thermococcus sibiricus (strain DSM 12597 / MM 739).